A 290-amino-acid polypeptide reads, in one-letter code: tRNA (adenine(58)-N(1))-methyltransferase catalytic subunit TRMT61A (290 aa).

Residue serine 2 is modified to N-acetylserine. Substrate regions lie at residues 20 to 22 (LGH), 35 to 42 (QTQTRHGV), 64 to 65 (GW), 85 to 89 (QILYS), and 110 to 117 (SGTGSGSV). S-adenosyl-L-methionine is bound by residues leucine 87, 114–116 (SGS), glutamate 135, arginine 140, 163–164 (DV), and aspartate 181. 2 substrate regions span residues 180-183 (LDIP) and 205-212 (SFSPCIEQ). Phosphoserine is present on serine 264. Residue threonine 279 participates in substrate binding.

The protein belongs to the class I-like SAM-binding methyltransferase superfamily. TRM61 family. In terms of assembly, heterotetramer; composed of two copies of TRMT6 and two copies of TRMT61A.

Its subcellular location is the nucleus. The enzyme catalyses adenosine(58) in tRNA + S-adenosyl-L-methionine = N(1)-methyladenosine(58) in tRNA + S-adenosyl-L-homocysteine + H(+). The catalysed reaction is an adenosine in mRNA + S-adenosyl-L-methionine = an N(1)-methyladenosine in mRNA + S-adenosyl-L-homocysteine + H(+). Catalytic subunit of tRNA (adenine-N(1)-)-methyltransferase, which catalyzes the formation of N(1)-methyladenine at position 58 (m1A58) in initiator methionyl-tRNA. Catalytic subunit of mRNA N(1)-methyltransferase complex, which mediates methylation of adenosine residues at the N(1) position of a small subset of mRNAs: N(1) methylation takes place in tRNA T-loop-like structures of mRNAs and is only present at low stoichiometries. The polypeptide is tRNA (adenine(58)-N(1))-methyltransferase catalytic subunit TRMT61A (Trmt61a) (Mus musculus (Mouse)).